Reading from the N-terminus, the 60-residue chain is Large ribosomal subunit protein bL32 (60 aa).

A disordered region spans residues 1-60 (MAVQQNKKSRSARDMRRSHDALEPNALSVEKSTGEVHLRHHVSPDGFYRGRKVIDKGADE). The segment covering 11 to 22 (SARDMRRSHDAL) has biased composition (basic and acidic residues).

It belongs to the bacterial ribosomal protein bL32 family.

This chain is Large ribosomal subunit protein bL32, found in Stutzerimonas stutzeri (strain A1501) (Pseudomonas stutzeri).